Reading from the N-terminus, the 1699-residue chain is DNA polymerase (1699 aa).

DOD-type homing endonuclease domains are found at residues 770–903 (LLGY…SLGI) and 1222–1361 (LIGL…LVGV).

Belongs to the DNA polymerase type-B family. Post-translationally, this protein undergoes a protein self splicing that involves a post-translational excision of the intervening region (intein) followed by peptide ligation.

The catalysed reaction is DNA(n) + a 2'-deoxyribonucleoside 5'-triphosphate = DNA(n+1) + diphosphate. In terms of biological role, in addition to polymerase activity, this DNA polymerase exhibits 3' to 5' exonuclease activity. Its function is as follows. PI-TspGE8I and PI-TspGE8II are endonucleases. The sequence is that of DNA polymerase (pol) from Thermococcus sp. (strain GE8).